Here is a 215-residue protein sequence, read N- to C-terminus: Golgi-associated RAB2 interactor protein 5A (215 aa).

Disordered regions lie at residues 1–20 (MKRGHEPKPAFGGAGEAGPG) and 174–215 (QDYS…LWGL). A compositionally biased stretch (acidic residues) spans 178–191 (ALEDDEDDDEDEDR).

This sequence belongs to the GARIN family. In terms of assembly, interacts (via N-terminus) with RAB2B (in GTP-bound form).

It is found in the golgi apparatus. Functionally, RAB2B effector protein which promotes cytosolic DNA-induced innate immune responses. Regulates IFN responses against DNA viruses by regulating the CGAS-STING signaling axis. This chain is Golgi-associated RAB2 interactor protein 5A (GARIN5A), found in Bos taurus (Bovine).